A 318-amino-acid chain; its full sequence is tRNA-modifying protein YgfZ (318 aa).

Positions 28 and 182 each coordinate folate.

The protein belongs to the tRNA-modifying YgfZ family.

It is found in the cytoplasm. In terms of biological role, folate-binding protein involved in regulating the level of ATP-DnaA and in the modification of some tRNAs. It is probably a key factor in regulatory networks that act via tRNA modification, such as initiation of chromosomal replication. This Aliivibrio fischeri (strain MJ11) (Vibrio fischeri) protein is tRNA-modifying protein YgfZ.